We begin with the raw amino-acid sequence, 398 residues long: Bone morphogenetic protein 2-A (398 aa).

Residues 1 to 23 (MVAGIHSLLLLLFYQVLLSGCTG) form the signal peptide. The propeptide occupies 24-284 (LIPEEGKRKY…GHALHKRQKR (261 aa)). N-linked (GlcNAc...) asparagine glycosylation is found at asparagine 137, asparagine 202, and asparagine 340. Disulfide bonds link cysteine 298–cysteine 363, cysteine 327–cysteine 395, and cysteine 331–cysteine 397.

This sequence belongs to the TGF-beta family. As to quaternary structure, homodimer; disulfide-linked.

It localises to the secreted. Functionally, induces cartilage and bone formation. The polypeptide is Bone morphogenetic protein 2-A (bmp2-a) (Xenopus laevis (African clawed frog)).